A 209-amino-acid chain; its full sequence is Ion-translocating oxidoreductase complex subunit G (209 aa).

The helical transmembrane segment at 9 to 29 (GITLALFAAGATGLTAVVNSL) threads the bilayer. Threonine 175 is modified (FMN phosphoryl threonine).

The protein belongs to the RnfG family. The complex is composed of six subunits: RnfA, RnfB, RnfC, RnfD, RnfE and RnfG. The cofactor is FMN.

Its subcellular location is the cell inner membrane. Its function is as follows. Part of a membrane-bound complex that couples electron transfer with translocation of ions across the membrane. In Yersinia pestis, this protein is Ion-translocating oxidoreductase complex subunit G.